Here is a 142-residue protein sequence, read N- to C-terminus: Large ribosomal subunit protein uL11 (142 aa).

Belongs to the universal ribosomal protein uL11 family. Part of the ribosomal stalk of the 50S ribosomal subunit. Interacts with L10 and the large rRNA to form the base of the stalk. L10 forms an elongated spine to which L12 dimers bind in a sequential fashion forming a multimeric L10(L12)X complex. In terms of processing, one or more lysine residues are methylated.

Forms part of the ribosomal stalk which helps the ribosome interact with GTP-bound translation factors. The polypeptide is Large ribosomal subunit protein uL11 (Mycobacterium sp. (strain JLS)).